The primary structure comprises 120 residues: Small ribosomal subunit protein bS16 (120 aa).

Positions 81–120 are disordered; the sequence is GLAKRPARNNPQKAEPGEKSKERAAKRAEKAAAPAEDAAA. Positions 95-110 are enriched in basic and acidic residues; the sequence is EPGEKSKERAAKRAEK. A compositionally biased stretch (low complexity) spans 111–120; the sequence is AAAPAEDAAA.

Belongs to the bacterial ribosomal protein bS16 family.

The sequence is that of Small ribosomal subunit protein bS16 from Methylorubrum populi (strain ATCC BAA-705 / NCIMB 13946 / BJ001) (Methylobacterium populi).